The sequence spans 764 residues: 5-methyltetrahydropteroyltriglutamate--homocysteine methyltransferase (764 aa).

5-methyltetrahydropteroyltri-L-glutamate contacts are provided by residues 16–19 and Lys121; that span reads RELK. Residues 440 to 442 and Glu493 contribute to the L-homocysteine site; that span reads IGS. L-methionine-binding positions include 440 to 442 and Glu493; that span reads IGS. 5-methyltetrahydropteroyltri-L-glutamate-binding positions include 524–525 and Trp570; that span reads RC. Residue Asp608 coordinates L-homocysteine. Asp608 provides a ligand contact to L-methionine. Glu614 is a binding site for 5-methyltetrahydropteroyltri-L-glutamate. Positions 650, 652, and 674 each coordinate Zn(2+). The active-site Proton donor is the His703. Cys735 is a binding site for Zn(2+).

Belongs to the vitamin-B12 independent methionine synthase family. Zn(2+) serves as cofactor.

It catalyses the reaction 5-methyltetrahydropteroyltri-L-glutamate + L-homocysteine = tetrahydropteroyltri-L-glutamate + L-methionine. The protein operates within amino-acid biosynthesis; L-methionine biosynthesis via de novo pathway; L-methionine from L-homocysteine (MetE route): step 1/1. Its function is as follows. Catalyzes the transfer of a methyl group from 5-methyltetrahydrofolate to homocysteine resulting in methionine formation. This Burkholderia lata (strain ATCC 17760 / DSM 23089 / LMG 22485 / NCIMB 9086 / R18194 / 383) protein is 5-methyltetrahydropteroyltriglutamate--homocysteine methyltransferase.